Consider the following 31-residue polypeptide: Cyclotide mech-4 (31 aa).

A cross-link (cyclopeptide (Gly-Asp)) is located at residues 1-31; that stretch reads GSIPCGESCVYIPCISSLLGCSCKSKVCYKD. Intrachain disulfides connect C5–C21, C9–C23, and C14–C28.

In terms of processing, this is a cyclic peptide. Post-translationally, contains 3 disulfide bonds.

Probably participates in a plant defense mechanism (Potential). Binds to and induces leakage in phospholipd membranes, particularly ones containing 1-palmitoyl-2-oleophosphatidylethanolamine (POPE). This Melicytus chathamicus (Chatham Island mahoe) protein is Cyclotide mech-4.